The following is a 365-amino-acid chain: Galactoside alpha-(1,2)-fucosyltransferase 1 (365 aa).

The Cytoplasmic portion of the chain corresponds to 1–8 (MWPLSHRH). Residues 9-25 (LCLAFLLVCVLSAISFF) traverse the membrane as a helical; Signal-anchor for type II membrane protein segment. Residues 26–365 (LHIYQDSIRH…LSSLWTLAEP (340 aa)) are Lumenal-facing. Asn65, Asn301, and Asn327 each carry an N-linked (GlcNAc...) asparagine glycan.

Belongs to the glycosyltransferase 11 family.

The protein localises to the golgi apparatus. It localises to the golgi stack membrane. It catalyses the reaction a beta-D-galactosyl-(1-&gt;4)-N-acetyl-beta-D-glucosaminyl derivative + GDP-beta-L-fucose = an alpha-L-Fuc-(1-&gt;2)-beta-D-Gal-(1-&gt;4)-beta-D-GlcNAc derivative + GDP + H(+). It carries out the reaction a ganglioside GA1 + GDP-beta-L-fucose = a ganglioside Fuc-GA1 + GDP + H(+). The enzyme catalyses a beta-D-Gal-(1-&gt;3)-beta-D-GlcNAc-(1-&gt;3)-beta-D-Gal-(1-&gt;4)-beta-D-Glc-(1&lt;-&gt;1')-Cer(d18:1(4E)) + GDP-beta-L-fucose = alpha-L-fucosyl-(1-&gt;2)- beta-D-galactosyl-(1-&gt;3)-N-acetyl-beta-D-glucosaminyl-(1-&gt;3)-beta-D-galactosyl-(1-&gt;4)-beta-D-glucosyl-(1&lt;-&gt;1')-N-acylsphing-4-enine + GDP + H(+). The catalysed reaction is a neolactoside nLc4Cer(d18:1(4E)) + GDP-beta-L-fucose = a neolactoside IV(2)-alpha-Fuc-nLc4Cer(d18:1(4E)) + GDP + H(+). It catalyses the reaction a ganglioside GM1 + GDP-beta-L-fucose = a ganglioside Fuc-GM1 + GDP + H(+). It carries out the reaction beta-D-galactosyl-(1-&gt;3)-N-acetyl-D-galactosamine + GDP-beta-L-fucose = alpha-L-fucosyl-(1-&gt;2)-beta-D-galactosyl-(1-&gt;3)-N-acetyl-D-galactosamine + GDP + H(+). The protein operates within protein modification; protein glycosylation. Its function is as follows. Catalyzes the transfer of L-fucose, from a guanosine diphosphate-beta-L-fucose, to the terminal galactose residue of glycoconjugates through an alpha(1,2) linkage leading to H antigen synthesis that is an intermediate substrate in the synthesis of ABO blood group antigens. H antigen is essential for maturation of the glomerular layer of the main olfactory bulb, in cell migration and early cell-cell contacts during tumor associated angiogenesis. Preferentially fucosylates soluble lactose and to a lesser extent fucosylates glycolipids gangliosides GA1 and GM1a. The chain is Galactoside alpha-(1,2)-fucosyltransferase 1 from Leontocebus fuscicollis (Brown-mantled tamarin).